The sequence spans 728 residues: Probable subtilase-type serine protease DR_A0283 (728 aa).

Residues 1 to 22 form the signal peptide; sequence MPGALPMKKISLAVLSLTTLLA. Residues 23–148 constitute a propeptide that is removed on maturation; the sequence is ACGQPQTSPQ…RTAQDQLGAQ (126 aa). Residues 159 to 471 enclose the Peptidase S8 domain; that stretch reads QYALDSNHLH…YGLIRMDKLA (313 aa). Residues aspartate 188, histidine 242, and serine 412 each act as charge relay system in the active site.

This sequence belongs to the peptidase S8 family.

It is found in the secreted. The chain is Probable subtilase-type serine protease DR_A0283 from Deinococcus radiodurans (strain ATCC 13939 / DSM 20539 / JCM 16871 / CCUG 27074 / LMG 4051 / NBRC 15346 / NCIMB 9279 / VKM B-1422 / R1).